Here is a 343-residue protein sequence, read N- to C-terminus: Uroporphyrinogen decarboxylase (343 aa).

Residues 23–27 (RQAGR), D73, Y150, S205, and H322 contribute to the substrate site.

This sequence belongs to the uroporphyrinogen decarboxylase family. Homodimer.

Its subcellular location is the cytoplasm. It carries out the reaction uroporphyrinogen III + 4 H(+) = coproporphyrinogen III + 4 CO2. It participates in porphyrin-containing compound metabolism; protoporphyrin-IX biosynthesis; coproporphyrinogen-III from 5-aminolevulinate: step 4/4. Functionally, catalyzes the decarboxylation of four acetate groups of uroporphyrinogen-III to yield coproporphyrinogen-III. This is Uroporphyrinogen decarboxylase from Cereibacter sphaeroides (strain ATCC 17025 / ATH 2.4.3) (Rhodobacter sphaeroides).